Reading from the N-terminus, the 761-residue chain is MNWRLVEFLYLLFIWDHILVQPSHQDPAATNQHVSKEFDWLISDRGPFHHSRSYLSFVERHRQGFTTRYKIYREFARWKVRNTAIERRDLLHNPLPLMPEFQRSIRLLGRRPTTQQFIDTIIKKYGTHILISATLGGEEALTMYMDKSRLDRKSGNATQSVEALHQLASSYFVDRDGTMRRLHEIQISTGAIKVTETRTGPLGCNSYDNLDSVSSVLLQSTESKLHLQGLQIIFPQYLQEKFVQSALSYIMCNGEGEYICRNSQCGCQCAEEFPQCNCPITDIQIMEYTLANMAKTWTEAYKDLENSDEFKSFMKRLPSNHFLTIASIHQHWGNDWDLQNRYKLLQSSLEAQRQKIQRTARKLFGLSVRCRHNPNHQLPRERTIQEWLTRVQSLLYCNENGFWGTFLESQRSCVCHGGTSLCQRPIPCIIGGNNSCAMCSLANISLCGSCNKGYKLYRGRCEPQNVDSERSEQFISFETDLDFQDLELKYLLQKMDSRLYVHTTFISNEIRLDTFFDPRWRKRMSLTLKSNKNRMDFIHMVIGISMRICQMRNSSLDPMFFVYVNPFSGSHSEGWNMPFGEYGYPRWEKIRLQNSQCYNWTLLLGNRWKTFFETVHIYLRSRTRLPSLLRNETGQGPVDLSDPSKRQFYIKISDVQVYGYSLRFNADLLRSAVQQVNQSYTQGGQFYSSSSVMLLLLDIRDRINRLAPPVAPGKPQLDLFSCMLKHRLKLTNSEIIRVNHALDLYNTEILKQSDQMTAKLC.

A signal peptide spans methionine 1–proline 22. Residues arginine 68–methionine 251 form the MACPF domain. Asparagine 156, asparagine 433, asparagine 443, asparagine 553, asparagine 599, asparagine 631, and asparagine 677 each carry an N-linked (GlcNAc...) asparagine glycan.

The protein belongs to the BRINP family.

It is found in the cytoplasm. Its function is as follows. Plays a role in neurogenesis and brain development. May suppress cell cycle progression in postmitotic neurons by inhibiting G1/S transition. This is BMP/retinoic acid-inducible neural-specific protein 1 (BRINP1) from Gallus gallus (Chicken).